The sequence spans 540 residues: Probable metabolite transport protein YFL040W (540 aa).

Topologically, residues 1 to 29 (MTAMKAIVWRLPKMPKIKITKTYEVTKIT) are cytoplasmic. Residues 30–50 (AILTLVGFIMGLEVPSLATFL) form a helical membrane-spanning segment. The Extracellular portion of the chain corresponds to 51 to 67 (TNKTFNEYFKYPTPLQQ). Asn-52 carries N-linked (GlcNAc...) asparagine glycosylation. The chain crosses the membrane as a helical span at residues 68 to 88 (GLLMGSTPLGGIMGCFICCIM). Residues 89–101 (NDRFSRIYQFQSG) are Cytoplasmic-facing. The helical transmembrane segment at 102-122 (IIIWNIVTLLNFCIWDILGLL) threads the bilayer. The Extracellular segment spans residues 123–126 (ICRM). Residues 127-147 (IKGMILGNFSILVASYANEVI) form a helical membrane-spanning segment. Topologically, residues 148-158 (PRGKRGSTMSY) are cytoplasmic. The chain crosses the membrane as a helical span at residues 159 to 179 (IQLCLTIGILVMHYLCIALSL). The Extracellular portion of the chain corresponds to 180-187 (WDSHFAFR). The chain crosses the membrane as a helical span at residues 188–208 (IAWCIGIIPGLLFWMASYALP). The Cytoplasmic portion of the chain corresponds to 209–275 (ESYHWLVLHG…KKLPRGSFKP (67 aa)). Residues 276–296 (LILGMTLQLLVQFSGINIILG) traverse the membrane as a helical segment. The Extracellular segment spans residues 297-313 (YITYICEIVGLEGNVKL). Residues 314 to 334 (FTSSIPYFINMVLSLLPITFI) form a helical membrane-spanning segment. Residues 335 to 341 (DYTSRKL) are Cytoplasmic-facing. Residues 342-362 (ITLLGGFPISGLLITIGALFV) traverse the membrane as a helical segment. Residues 363-385 (KYGQDTKPIDGNRSLVWSIGENP) are Extracellular-facing. Asn-374 carries an N-linked (GlcNAc...) asparagine glycan. Residues 386–406 (FVGGWILTLCFLIVGIFAMSL) form a helical membrane-spanning segment. Topologically, residues 407–428 (SSIPWVYTNEMLPSRVKVKGFA) are cytoplasmic. A helical membrane pass occupies residues 429-449 (ICVTFGWLGNFILTFLCPVMI). Residues 450–455 (ERLKGT) lie on the Extracellular side of the membrane. A helical membrane pass occupies residues 456 to 476 (TFIIFGSLTFLISLSVLIWFP). Residues 477-540 (ETKGMSIEDI…KLKSDEEMII (64 aa)) lie on the Cytoplasmic side of the membrane. The disordered stretch occupies residues 499-540 (NLHGEKGIKTPDSNSNGGSTRSSQEGQLHKPIKLKSDEEMII). The span at 509 to 524 (PDSNSNGGSTRSSQEG) shows a compositional bias: polar residues.

Belongs to the major facilitator superfamily. Sugar transporter (TC 2.A.1.1) family.

It is found in the membrane. This Saccharomyces cerevisiae (strain ATCC 204508 / S288c) (Baker's yeast) protein is Probable metabolite transport protein YFL040W.